The chain runs to 179 residues: Ribosome maturation factor RimM (179 aa).

The PRC barrel domain occupies 100 to 176 (KEEFHLLELI…FVIINPPNGL (77 aa)).

This sequence belongs to the RimM family. In terms of assembly, binds ribosomal protein uS19.

The protein localises to the cytoplasm. An accessory protein needed during the final step in the assembly of 30S ribosomal subunit, possibly for assembly of the head region. Essential for efficient processing of 16S rRNA. May be needed both before and after RbfA during the maturation of 16S rRNA. It has affinity for free ribosomal 30S subunits but not for 70S ribosomes. This is Ribosome maturation factor RimM from Prochlorococcus marinus (strain MIT 9301).